A 591-amino-acid polypeptide reads, in one-letter code: V-type ATP synthase alpha chain (591 aa).

233 to 240 (GPFGAGKT) is a binding site for ATP.

The protein belongs to the ATPase alpha/beta chains family.

It catalyses the reaction ATP + H2O + 4 H(+)(in) = ADP + phosphate + 5 H(+)(out). Produces ATP from ADP in the presence of a proton gradient across the membrane. The V-type alpha chain is a catalytic subunit. In Streptococcus pyogenes serotype M5 (strain Manfredo), this protein is V-type ATP synthase alpha chain.